A 289-amino-acid polypeptide reads, in one-letter code: Glycine--tRNA ligase alpha subunit (289 aa).

This sequence belongs to the class-II aminoacyl-tRNA synthetase family. As to quaternary structure, tetramer of two alpha and two beta subunits.

It is found in the cytoplasm. The catalysed reaction is tRNA(Gly) + glycine + ATP = glycyl-tRNA(Gly) + AMP + diphosphate. The polypeptide is Glycine--tRNA ligase alpha subunit (Rickettsia felis (strain ATCC VR-1525 / URRWXCal2) (Rickettsia azadi)).